Reading from the N-terminus, the 432-residue chain is Ornithine decarboxylase 1A, chloroplastic (432 aa).

The residue at position 95 (lysine 95) is an N6-(pyridoxal phosphate)lysine. Residues serine 227, glycine 265, and glutamate 298 to arginine 301 each bind pyridoxal 5'-phosphate. Tyrosine 341–aspartate 342 serves as a coordination point for substrate. Cysteine 377 acts as the Proton donor; shared with dimeric partner in catalysis. Aspartate 378 lines the substrate pocket. Tyrosine 406 contacts pyridoxal 5'-phosphate.

Belongs to the Orn/Lys/Arg decarboxylase class-II family. Homodimer. Only the dimer is catalytically active, as the active sites are constructed of residues from both monomers. Requires pyridoxal 5'-phosphate as cofactor.

It localises to the plastid. The protein localises to the chloroplast. The catalysed reaction is L-ornithine + H(+) = putrescine + CO2. Its pathway is alkaloid biosynthesis; nicotine biosynthesis. It participates in amine and polyamine biosynthesis; putrescine biosynthesis via L-ornithine pathway; putrescine from L-ornithine: step 1/1. Involved in the biosynthesis of pyridine alkaloid natural products, leading mainly to the production of anabasine, anatabine, nicotine and nornicotine, effective deterrents against herbivores with antiparasitic and pesticide properties (neurotoxins); nornicotine serves as the precursor in the synthesis of the carcinogen compound N'-nitrosonornicotine (NNN). Catalyzes the first and rate-limiting step of polyamine biosynthesis that converts ornithine into putrescine, which is the precursor for the polyamines, spermidine and spermine. Polyamines are essential for cell proliferation and are implicated in cellular processes, ranging from DNA replication to apoptosis. In Nicotiana tabacum (Common tobacco), this protein is Ornithine decarboxylase 1A, chloroplastic.